The following is an 85-amino-acid chain: UPF0297 protein CPR_1749 (85 aa).

The protein belongs to the UPF0297 family.

This is UPF0297 protein CPR_1749 from Clostridium perfringens (strain SM101 / Type A).